The primary structure comprises 727 residues: NADH-ubiquinone oxidoreductase 75 kDa subunit, mitochondrial (727 aa).

A mitochondrion-targeting transit peptide spans 1–23 (MLRIPVRKALVGLSKSSKGCVRT). The region spanning 30 to 108 (NLIEVFVDGQ…GWNILTNSEK (79 aa)) is the 2Fe-2S ferredoxin-type domain. [2Fe-2S] cluster-binding residues include C64, C75, and C78. Position 84 is an N6-acetyllysine (K84). C92 lines the [2Fe-2S] cluster pocket. The 4Fe-4S His(Cys)3-ligated-type domain occupies 108–147 (KTKKAREGVMEFLLANHPLDCPICDQGGECDLQDQSMMFG). Residues H124, C128, C131, C137, C176, C179, C182, and C226 each coordinate [4Fe-4S] cluster. Positions 245-301 (TRKTESIDVMDAVGSNIVVSTRTGEVMRILPRMHEDINEEWISDKTRFAYDGLKRQR) constitute a 4Fe-4S Mo/W bis-MGD-type domain. N6-acetyllysine occurs at positions 499 and 709.

The protein belongs to the complex I 75 kDa subunit family. In terms of assembly, core subunit of respiratory chain NADH dehydrogenase (Complex I) which is composed of 45 different subunits. This is the largest subunit of complex I and it is a component of the iron-sulfur (IP) fragment of the enzyme. Complex I associates with ubiquinol-cytochrome reductase complex (Complex III) to form supercomplexes. Interacts with MDM2 and AKAP1. The cofactor is [2Fe-2S] cluster. [4Fe-4S] cluster is required as a cofactor.

It localises to the mitochondrion inner membrane. It catalyses the reaction a ubiquinone + NADH + 5 H(+)(in) = a ubiquinol + NAD(+) + 4 H(+)(out). Functionally, core subunit of the mitochondrial membrane respiratory chain NADH dehydrogenase (Complex I) which catalyzes electron transfer from NADH through the respiratory chain, using ubiquinone as an electron acceptor. Essential for catalysing the entry and efficient transfer of electrons within complex I. Plays a key role in the assembly and stability of complex I and participates in the association of complex I with ubiquinol-cytochrome reductase complex (Complex III) to form supercomplexes. The polypeptide is NADH-ubiquinone oxidoreductase 75 kDa subunit, mitochondrial (NDUFS1) (Bos taurus (Bovine)).